Consider the following 701-residue polypeptide: SH3 domain-binding protein 1 (701 aa).

The segment covering 1–10 has biased composition (basic residues); it reads MMKRQLHRMR. 2 disordered regions span residues 1–23 and 160–182; these read MMKRQLHRMRQLAQTGSLGRTPE and SQATKNSGSSQGLGGSPGSHSHT. Positions 1–275 are interaction with CGNL1; the sequence is MMKRQLHRMR…TATHFPRVYG (275 aa). The BAR domain occupies 17-262; the sequence is SLGRTPETAE…RENHGQADHS (246 aa). Phosphoserine is present on residues Ser175, Ser241, Ser262, and Ser264. The Rho-GAP domain maps to 276 to 469; the sequence is VSLATHLQEL…ALIQSADTLF (194 aa). An interaction with CD2AP region spans residues 470–701; it reads PGDINFNVSG…RPRSLASETN (232 aa). A disordered region spans residues 496 to 701; sequence SEELPSTAVP…RPRSLASETN (206 aa). Pro residues predominate over residues 508–522; it reads ATTPAPAPAPAPAPA. Ser544 and Ser550 each carry phosphoserine. Pro residues-rich tracts occupy residues 570 to 579 and 587 to 596; these read PARPTMPPPQ and PPAPPLPPGS. Position 601 is a phosphothreonine (Thr601). Residues 616–625 carry the SH3-binding motif; it reads APTVPPPLPP. 2 stretches are compositionally biased toward pro residues: residues 618-630 and 641-652; these read TVPPPLPPTPPQP and SPSPASPGPASP. Thr626 carries the post-translational modification Phosphothreonine. Residue Ser653 is modified to Phosphoserine. Low complexity predominate over residues 666 to 677; sequence GAATAEGGAPEA. Positions 682–692 are enriched in pro residues; that stretch reads PTPPAIPPQPR.

Interacts with RAC1. Interacts with the exocyst via EXOC4 and EXOC8; required for the localization of both SH3BP1 and the exocyst to the leading edge of migrating cells. Interacts with CD2AP and CGNL1; probably part of a complex at cell junctions. Interacts with CAPZA1; recruits CAPZA1 to forming cell junctions. May interact with AFDN. Interacts with PLXND1; they dissociate upon SEMA3E binding to PLXND1 allowing SH3BP1 to transduce downstream signal through RAC1 inactivation. Interacts with ABL1, GRB2 and SRC (via SH3 domain).

The protein localises to the cell projection. It localises to the cell junction. The protein resides in the tight junction. It is found in the adherens junction. Its subcellular location is the phagocytic cup. The protein localises to the nucleus. It localises to the cytoplasm. The protein resides in the cytosol. GTPase activating protein (GAP) which specifically converts GTP-bound Rho-type GTPases including RAC1 and CDC42 in their inactive GDP-bound form. By specifically inactivating RAC1 at the leading edge of migrating cells, it regulates the spatiotemporal organization of cell protrusions which is important for proper cell migration. Also negatively regulates CDC42 in the process of actin remodeling and the formation of epithelial cell junctions. Through its GAP activity toward RAC1 and/or CDC42 plays a specific role in phagocytosis of large particles. Specifically recruited by a PI3 kinase/PI3K-dependent mechanism to sites of large particles engagement, inactivates RAC1 and/or CDC42 allowing the reorganization of the underlying actin cytoskeleton required for engulfment. It also plays a role in angiogenesis and the process of repulsive guidance as part of a semaphorin-plexin signaling pathway. Following the binding of PLXND1 to extracellular SEMA3E it dissociates from PLXND1 and inactivates RAC1, inducing the intracellular reorganization of the actin cytoskeleton and the collapse of cells. The chain is SH3 domain-binding protein 1 from Homo sapiens (Human).